Here is a 389-residue protein sequence, read N- to C-terminus: Gastricsin (389 aa).

A signal peptide spans 1–16 (MKWMVVVLLCLQLLEA). The propeptide at 17–59 (KVVKVPLKKLKSLRETMKEKGLLEEFLKNHKYDPAQKYRYTDF) is activation peptide. In terms of domain architecture, Peptidase A1 spans 73-386 (YFGEISIGTP…DMGNNRVGFA (314 aa)). Residue aspartate 91 is part of the active site. 2 disulfides stabilise this stretch: cysteine 104–cysteine 109 and cysteine 268–cysteine 272. Aspartate 277 is a catalytic residue. A disulfide bridge links cysteine 311 with cysteine 344.

The protein belongs to the peptidase A1 family.

It localises to the secreted. The catalysed reaction is More restricted specificity than pepsin A, but shows preferential cleavage at Tyr-|-Xaa bonds. High activity on hemoglobin.. In terms of biological role, hydrolyzes a variety of proteins. In Rhinolophus ferrumequinum (Greater horseshoe bat), this protein is Gastricsin (PGC).